The chain runs to 1735 residues: Cadherin-AgCad1 (1735 aa).

Positions 1–30 (MKCVASKFNMWLHLGWLLGLLLVLLPLVRC) are cleaved as a signal peptide. The Extracellular segment spans residues 31–1574 (QGWGEPRFET…ALTEADETLQ (1544 aa)). An extracellular domain (EC) region spans residues 166 to 1456 (VTDCLFNVYH…KVYIVSESNR (1291 aa)). Cadherin domains lie at 171–273 (FNVY…PPIF), 280–378 (ERIM…IPEI), 379–498 (YMKP…VPKF), 499–620 (GRDE…PPQI), 621–757 (TLPR…APYF), 767–866 (SVKE…QPYH), 879–983 (EKIP…TPKL), 985–1109 (ELAA…TPSI), 1136–1235 (GSPL…EPTF), 1255–1350 (AEDP…PPVF), and 1351–1461 (QQRL…TFVF). 2 short sequence motifs (toxin-binding receptor motif) span residues 1344–1350 (NDNPPVF) and 1446–1456 (AKVYIVSESNR). The CR11-MPED, increases toxicity of activated Cry4B toxin, peptide alone is not toxic stretch occupies residues 1358–1569 (GITTNDRVPK…PLATEALTEA (212 aa)). The membrane-proximal EC domain (MPED) stretch occupies residues 1457-1569 (VTFVFLNSVE…PLATEALTEA (113 aa)). Residues 1575–1595 (IILIVVSAALAVLCVILFVAF) traverse the membrane as a helical segment. Residues 1596 to 1735 (FIKIRSLNRQ…ETDDELSHRF (140 aa)) lie on the Cytoplasmic side of the membrane. A compositionally biased stretch (polar residues) spans 1701–1719 (SLNPMANGTDKSNDGAPTS). A disordered region spans residues 1701–1735 (SLNPMANGTDKSNDGAPTSNHKKLDETDDELSHRF). Positions 1722 to 1735 (KKLDETDDELSHRF) are enriched in basic and acidic residues.

In terms of tissue distribution, larval midgut (at protein level).

It localises to the apical cell membrane. Its subcellular location is the cell projection. The protein resides in the microvillus membrane. Cadherins are calcium-dependent cell adhesion proteins. They preferentially interact with themselves in a homophilic manner in connecting cells. Its function is as follows. (Microbial infection) Binds to and is probably the functional receptor for B.thuringiensis subsp. israelensis (Bti) insecticidal toxin Cry4B. Trichoplusia ni insect cells stably transfected with this protein become suspectible to Cry4B; cells undergo oncosis, they bleb and ruffle after 20-40 minutes, swell after 40-60 minutes and lyse after 90 minutes. Following toxin treatment in the T.in insect system levels of intracellular 3',5'-cyclic AMP (cAMP) rise 12.5-fold; EDTA but not EGTA pretreatment prevents cAMP increase. Inorganic phosphate also rises 3.4-fold after toxin treatment. This is Cadherin-AgCad1 from Anopheles gambiae (African malaria mosquito).